A 239-amino-acid polypeptide reads, in one-letter code: Leucine-rich repeat-containing protein 57 (239 aa).

Gly2 carries the N-myristoyl glycine lipid modification. LRR repeat units follow at residues 39-60 (NLRTIDLSNNKIESLPPLLIGK), 63-84 (LLKSLSLNNNKLTVLPDEICNL), 86-107 (KLETLSLNNNHLRELPSTFGQL), 109-131 (ALKTLSLSGNQLGALPPQLCSLR), 132-153 (HLDVMDLSKNQIRSIPDSVGEL), 154-175 (QVIELNLNQNQISQISVKISCC), 177-197 (RLKILRLEENCLELSMLPQSI), and 202-222 (QICLLAVEGNLFEIKKLRELE).

It localises to the membrane. The protein is Leucine-rich repeat-containing protein 57 (LRRC57) of Homo sapiens (Human).